The chain runs to 184 residues: Large ribosomal subunit protein uL22A (184 aa).

Residue Lys-46 forms a Glycyl lysine isopeptide (Lys-Gly) (interchain with G-Cter in ubiquitin) linkage. Thr-70 carries the post-translational modification Phosphothreonine.

The protein belongs to the universal ribosomal protein uL22 family. As to quaternary structure, component of the large ribosomal subunit (LSU). Mature yeast ribosomes consist of a small (40S) and a large (60S) subunit. The 40S small subunit contains 1 molecule of ribosomal RNA (18S rRNA) and 33 different proteins (encoded by 57 genes). The large 60S subunit contains 3 rRNA molecules (25S, 5.8S and 5S rRNA) and 46 different proteins (encoded by 81 genes). uL22 is associated with the polypeptide exit tunnel.

The protein resides in the cytoplasm. Functionally, component of the ribosome, a large ribonucleoprotein complex responsible for the synthesis of proteins in the cell. The small ribosomal subunit (SSU) binds messenger RNAs (mRNAs) and translates the encoded message by selecting cognate aminoacyl-transfer RNA (tRNA) molecules. The large subunit (LSU) contains the ribosomal catalytic site termed the peptidyl transferase center (PTC), which catalyzes the formation of peptide bonds, thereby polymerizing the amino acids delivered by tRNAs into a polypeptide chain. The nascent polypeptides leave the ribosome through a tunnel in the LSU and interact with protein factors that function in enzymatic processing, targeting, and the membrane insertion of nascent chains at the exit of the ribosomal tunnel. This is Large ribosomal subunit protein uL22A from Saccharomyces cerevisiae (strain ATCC 204508 / S288c) (Baker's yeast).